The primary structure comprises 141 residues: uncharacterized protein (141 aa).

In terms of domain architecture, HIT spans 10–117 (IFCDIVQGSI…VPKYETGKGF (108 aa)). Residues 102–106 (HFHLH) carry the Histidine triad motif motif.

This is an uncharacterized protein from Mycoplasma genitalium (strain ATCC 33530 / DSM 19775 / NCTC 10195 / G37) (Mycoplasmoides genitalium).